The chain runs to 422 residues: Probable tRNA pseudouridine synthase D 2 (422 aa).

D89 acts as the Nucleophile in catalysis. Residues 160-371 (GAPNYFDSQR…IYSERKILSI (212 aa)) enclose the TRUD domain.

Belongs to the pseudouridine synthase TruD family.

It catalyses the reaction uridine(13) in tRNA = pseudouridine(13) in tRNA. In terms of biological role, could be responsible for synthesis of pseudouridine from uracil-13 in transfer RNAs. In Methanocaldococcus jannaschii (strain ATCC 43067 / DSM 2661 / JAL-1 / JCM 10045 / NBRC 100440) (Methanococcus jannaschii), this protein is Probable tRNA pseudouridine synthase D 2.